A 336-amino-acid polypeptide reads, in one-letter code: O-methyltransferase 2 (336 aa).

5 residues coordinate S-adenosyl-L-methionine: G170, D198, N221, F222, and K237. Catalysis depends on H241, which acts as the Proton acceptor.

This sequence belongs to the class I-like SAM-binding methyltransferase superfamily. Cation-independent O-methyltransferase family. COMT subfamily.

The enzyme catalyses (3,5-dichloro-2,4,6-trihydroxyphenyl)hexan-1-one + S-adenosyl-L-methionine = 1-(3,5-dichloro-2,6-dihydroxy-4-methoxyphenyl)hexan-1-one + S-adenosyl-L-homocysteine + H(+). The polypeptide is O-methyltransferase 2 (omt2) (Dictyostelium discoideum (Social amoeba)).